The primary structure comprises 379 residues: GDP-mannose transporter 1 (379 aa).

At 1–39 the chain is on the cytoplasmic side; it reads MTDNRKPEDYTIEMDKLGQNKNYQAPPPPPQPRSSTASS. The disordered stretch occupies residues 17–38; the sequence is LGQNKNYQAPPPPPQPRSSTAS. A helical transmembrane segment spans residues 40-60; the sequence is ISNNAALSVLAYCGSSILMTV. At 61 to 69 the chain is on the lumenal side; that stretch reads MNKYVLSSD. Residues 70–90 traverse the membrane as a helical segment; the sequence is FNLNFFLLCVQSLVCIIAIQL. Residues 91 to 110 are Cytoplasmic-facing; that stretch reads CKACGLITYRDFNLDEARKW. The chain crosses the membrane as a helical span at residues 111 to 133; the sequence is FPITLLLIGMIYTGSKALQFLSI. Residues 134–136 lie on the Lumenal side of the membrane; the sequence is PVY. Residues 137 to 156 form a helical membrane-spanning segment; sequence TIFKNLTIILIAYGEVLWFG. Residues 157–162 lie on the Cytoplasmic side of the membrane; sequence GSVTNL. The chain crosses the membrane as a helical span at residues 163–182; the sequence is TLFSFGLMVFSSIIAAWADI. Over 183–198 the chain is Lumenal; the sequence is KHAIESSGDATSKVST. A helical transmembrane segment spans residues 199–219; the sequence is LNAGYIWMLINCLCTSSYVLG. At 220–233 the chain is on the cytoplasmic side; sequence MRKRIKLTNFKDFD. Residues 234-254 traverse the membrane as a helical segment; that stretch reads TMFYNNLLSIPVLIVCSGILE. Residues 255-272 lie on the Lumenal side of the membrane; it reads DWSPANVARNFPSADRNG. Residues 273–293 form a helical membrane-spanning segment; the sequence is IMFAMILSGLSTVFISYTSAW. Topologically, residues 294–301 are cytoplasmic; it reads CVRVTSST. A helical transmembrane segment spans residues 302–322; it reads TYSMVGALNKLPIALSGLIFF. At 323 to 325 the chain is on the lumenal side; it reads DAP. Residues 326 to 346 form a helical membrane-spanning segment; it reads VTFPSVSAIMVGFVSGIVYAV. The Cytoplasmic segment spans residues 347–379; sequence AKIKQNAKPKVGILPTTNPVSASSQSMRDSLRS.

This sequence belongs to the TPT transporter family. SLC35D subfamily. As to quaternary structure, homooligomer.

It localises to the golgi apparatus membrane. It is found in the cytoplasmic vesicle membrane. The protein localises to the endoplasmic reticulum membrane. Its function is as follows. Involved in the import of GDP-mannose from the cytoplasm into the Golgi lumen. In Emericella nidulans (strain FGSC A4 / ATCC 38163 / CBS 112.46 / NRRL 194 / M139) (Aspergillus nidulans), this protein is GDP-mannose transporter 1 (gmt1).